We begin with the raw amino-acid sequence, 343 residues long: Holliday junction branch migration complex subunit RuvB (343 aa).

Residues 4–193 (TDNLTAAQPQ…FGIVSRLEFY (190 aa)) form a large ATPase domain (RuvB-L) region. Residues Leu-32, Arg-33, Gly-74, Lys-77, Thr-78, Thr-79, 140–142 (EDY), Arg-183, Tyr-193, and Arg-230 contribute to the ATP site. Thr-78 provides a ligand contact to Mg(2+). Residues 194–264 (ENRDLATIVS…IADAALSMLD (71 aa)) form a small ATPAse domain (RuvB-S) region. The head domain (RuvB-H) stretch occupies residues 267–343 (VQGLDVMDRK…YLHFGLPVEK (77 aa)). DNA-binding residues include Arg-322 and Arg-327.

The protein belongs to the RuvB family. Homohexamer. Forms an RuvA(8)-RuvB(12)-Holliday junction (HJ) complex. HJ DNA is sandwiched between 2 RuvA tetramers; dsDNA enters through RuvA and exits via RuvB. An RuvB hexamer assembles on each DNA strand where it exits the tetramer. Each RuvB hexamer is contacted by two RuvA subunits (via domain III) on 2 adjacent RuvB subunits; this complex drives branch migration. In the full resolvosome a probable DNA-RuvA(4)-RuvB(12)-RuvC(2) complex forms which resolves the HJ.

The protein localises to the cytoplasm. It carries out the reaction ATP + H2O = ADP + phosphate + H(+). The RuvA-RuvB-RuvC complex processes Holliday junction (HJ) DNA during genetic recombination and DNA repair, while the RuvA-RuvB complex plays an important role in the rescue of blocked DNA replication forks via replication fork reversal (RFR). RuvA specifically binds to HJ cruciform DNA, conferring on it an open structure. The RuvB hexamer acts as an ATP-dependent pump, pulling dsDNA into and through the RuvAB complex. RuvB forms 2 homohexamers on either side of HJ DNA bound by 1 or 2 RuvA tetramers; 4 subunits per hexamer contact DNA at a time. Coordinated motions by a converter formed by DNA-disengaged RuvB subunits stimulates ATP hydrolysis and nucleotide exchange. Immobilization of the converter enables RuvB to convert the ATP-contained energy into a lever motion, pulling 2 nucleotides of DNA out of the RuvA tetramer per ATP hydrolyzed, thus driving DNA branch migration. The RuvB motors rotate together with the DNA substrate, which together with the progressing nucleotide cycle form the mechanistic basis for DNA recombination by continuous HJ branch migration. Branch migration allows RuvC to scan DNA until it finds its consensus sequence, where it cleaves and resolves cruciform DNA. In Neisseria meningitidis serogroup A / serotype 4A (strain DSM 15465 / Z2491), this protein is Holliday junction branch migration complex subunit RuvB.